We begin with the raw amino-acid sequence, 273 residues long: Gamma-glutamyl cyclotransferase aclK (273 aa).

The protein belongs to the class-I pyridoxal-phosphate-dependent aminotransferase family.

The catalysed reaction is an alpha-(gamma-L-glutamyl)-L-amino acid = 5-oxo-L-proline + an L-alpha-amino acid. It participates in mycotoxin biosynthesis. In terms of biological role, gamma-glutamyl cyclotransferase; part of the gene cluster that mediates the biosynthesis of aspirochlorine (or antibiotic A30641), an unusual halogenated spiro compound with distinctive antifungal properties due to selective inhibition of protein biosynthesis, and which is also active against bacteria, viruses, and murine tumor cells. The non-ribosomal peptide synthetase (NRPS) aclP is responsible the formation of the diketopiperazine (DKP) core from the condensation of 2 phenylalanine residues. One Phe residue is tailored into chlorotyrosine by hydroxylation and chlorination, whereas the second Phe undergoes an unprecedented C-C bond cleavage to be converted into glycine. After formation of the DKP, sulfur is incorporated into the DKP by conjugation with glutathione by aclG, followed by its stepwise degradation to the thiol by aclI, aclJ and aclK, and the dithiol oxidation by aclT. In addition, oxygenases (aclB, aclC, aclL and aclO) and O-methyltransferases (aclM and aclU) act as tailoring enzymes to produce the intermediate dechloroaspirochlorine. Ultimately, chlorination of dechloroaspirochlorine by the halogenase aclH is the last step in the aspirochlorine pathway. The sequence is that of Gamma-glutamyl cyclotransferase aclK from Aspergillus oryzae (strain ATCC 42149 / RIB 40) (Yellow koji mold).